The primary structure comprises 322 residues: (12E)-labda-8(17),12,14-triene synthase (322 aa).

Residues 1–11 (MNDATRTSTTP) show a composition bias toward polar residues. A disordered region spans residues 1 to 26 (MNDATRTSTTPPALPMPDLRDSFPGP). Positions 93 and 98 each coordinate Mg(2+). The short motif at 93–98 (DDAHGE) is the DDXXXE motif element. R188 lines the substrate pocket. Mg(2+)-binding residues include N234 and S238. The NXXXSXXXE motif signature appears at 234–242 (NDLASYAKE). Substrate is bound at residue K241. E242 serves as a coordination point for Mg(2+). 319 to 320 (RY) provides a ligand contact to substrate.

It belongs to the terpene synthase family. Requires Mg(2+) as cofactor.

The enzyme catalyses (+)-copalyl diphosphate = (12E)-labda-8(17),12,14-triene + diphosphate. Involved in the biosynthesis of the labdane-type bicyclic diterpene labda-8(17),12(E),14-triene. Catalyzes the conversion of (+)-copalyl diphosphate to yield labda-8(17),12(E),14-triene. The polypeptide is (12E)-labda-8(17),12,14-triene synthase (Streptomyces anulatus (Streptomyces chrysomallus)).